The primary structure comprises 181 residues: GTP cyclohydrolase 1 2 (181 aa).

It belongs to the GTP cyclohydrolase I family. In terms of assembly, homomer.

It carries out the reaction GTP + H2O = 7,8-dihydroneopterin 3'-triphosphate + formate + H(+). Its pathway is cofactor biosynthesis; 7,8-dihydroneopterin triphosphate biosynthesis; 7,8-dihydroneopterin triphosphate from GTP: step 1/1. The protein is GTP cyclohydrolase 1 2 (folE2) of Pseudomonas aeruginosa (strain ATCC 15692 / DSM 22644 / CIP 104116 / JCM 14847 / LMG 12228 / 1C / PRS 101 / PAO1).